The chain runs to 311 residues: uncharacterized protein (311 aa).

Positions 1–12 are enriched in polar residues; it reads MPATDTNSTHTT. Disordered stretches follow at residues 1–44 and 205–268; these read MPAT…DEEH and ERPS…ATVH. Residues 35-44 are compositionally biased toward basic and acidic residues; sequence TSDKHADEEH.

Belongs to the HHV-5 HKLF1 family.

This is an uncharacterized protein from Human cytomegalovirus (strain AD169) (HHV-5).